Here is a 131-residue protein sequence, read N- to C-terminus: Small ribosomal subunit protein uS11 (131 aa).

Belongs to the universal ribosomal protein uS11 family. In terms of assembly, part of the 30S ribosomal subunit. Interacts with proteins S7 and S18. Binds to IF-3.

Located on the platform of the 30S subunit, it bridges several disparate RNA helices of the 16S rRNA. Forms part of the Shine-Dalgarno cleft in the 70S ribosome. The polypeptide is Small ribosomal subunit protein uS11 (Buchnera aphidicola subsp. Acyrthosiphon pisum (strain 5A)).